Reading from the N-terminus, the 82-residue chain is Photosystem I iron-sulfur center (82 aa).

2 consecutive 4Fe-4S ferredoxin-type domains span residues 2-31 (SHTV…MVPW) and 37-68 (GQIA…VRVY). [4Fe-4S] cluster-binding residues include Cys-11, Cys-14, Cys-17, Cys-21, Cys-48, Cys-51, Cys-54, and Cys-58.

In terms of assembly, the eukaryotic PSI reaction center is composed of at least 11 subunits. [4Fe-4S] cluster is required as a cofactor.

The protein localises to the plastid. It localises to the chloroplast thylakoid membrane. The enzyme catalyses reduced [plastocyanin] + hnu + oxidized [2Fe-2S]-[ferredoxin] = oxidized [plastocyanin] + reduced [2Fe-2S]-[ferredoxin]. Functionally, apoprotein for the two 4Fe-4S centers FA and FB of photosystem I (PSI); essential for photochemical activity. FB is the terminal electron acceptor of PSI, donating electrons to ferredoxin. The C-terminus interacts with PsaA/B/D and helps assemble the protein into the PSI complex. Required for binding of PsaD and PsaE to PSI. PSI is a plastocyanin/cytochrome c6-ferredoxin oxidoreductase, converting photonic excitation into a charge separation, which transfers an electron from the donor P700 chlorophyll pair to the spectroscopically characterized acceptors A0, A1, FX, FA and FB in turn. The sequence is that of Photosystem I iron-sulfur center from Trieres chinensis (Marine centric diatom).